Consider the following 215-residue polypeptide: Meiotic chromosome segregation protein P8B7.28c (215 aa).

Residues 159 to 202 are disordered; that stretch reads TINSEYADDVSDNTDEERTESKGQQESNSAEEYDDDDSDEDRME. Composition is skewed to acidic residues over residues 164–176 and 187–201; these read YADD…DEER and SAEE…EDRM.

It is found in the nucleus. Its subcellular location is the nucleolus. Functionally, required for meiotic chromosome segregation. This chain is Meiotic chromosome segregation protein P8B7.28c, found in Schizosaccharomyces pombe (strain 972 / ATCC 24843) (Fission yeast).